Consider the following 171-residue polypeptide: Phosphopantetheine adenylyltransferase (171 aa).

Substrate is bound at residue threonine 9. ATP contacts are provided by residues 9–10 and histidine 17; that span reads TF. Lysine 41, leucine 73, and arginine 87 together coordinate substrate. ATP contacts are provided by residues 88-90, glutamate 98, and 123-129; these read GLR and YQFISGT.

Belongs to the bacterial CoaD family. As to quaternary structure, homohexamer. Mg(2+) is required as a cofactor.

The protein resides in the cytoplasm. The catalysed reaction is (R)-4'-phosphopantetheine + ATP + H(+) = 3'-dephospho-CoA + diphosphate. Its pathway is cofactor biosynthesis; coenzyme A biosynthesis; CoA from (R)-pantothenate: step 4/5. In terms of biological role, reversibly transfers an adenylyl group from ATP to 4'-phosphopantetheine, yielding dephospho-CoA (dPCoA) and pyrophosphate. The sequence is that of Phosphopantetheine adenylyltransferase from Paraburkholderia phytofirmans (strain DSM 17436 / LMG 22146 / PsJN) (Burkholderia phytofirmans).